The following is a 512-amino-acid chain: Keratin, type I cytoskeletal 24 (512 aa).

A disordered region spans residues 1 to 21 (MFCSAQKGSCSSRVSSSGAVG). The head stretch occupies residues 1–140 (MFCSAQKGSC…GYDGGLLSGS (140 aa)). Residues 8-21 (GSCSSRVSSSGAVG) show a composition bias toward low complexity. The segment at 141-176 (EKQTMQDLNDRLANYLDKVRALEEANTDLECKIKDW) is coil 1A. Positions 141-455 (EKQTMQDLND…RLLNGDGGGC (315 aa)) constitute an IF rod domain. A linker 1 region spans residues 177–197 (YGKHGSVKGGSGRDYSQYYSI). The coil 1B stretch occupies residues 198–289 (IEDLKKQILS…KNHEEEMKCM (92 aa)). The linker 12 stretch occupies residues 290-312 (QGSSGGDVTVEMNAAPGVDLTKL). The tract at residues 313 to 451 (LNDMRAQYEA…ETYRRLLNGD (139 aa)) is coil 2. Residues 452-512 (GGGCDYRNLV…VSNISEVKIK (61 aa)) form a tail region.

The protein belongs to the intermediate filament family. Heterotetramer of two type I and two type II keratins.

This is Keratin, type I cytoskeletal 24 (Krt24) from Mus musculus (Mouse).